The following is a 123-amino-acid chain: Small ribosomal subunit protein uS13c (123 aa).

Positions 99–123 (GQRTRSNARTRRGAKKTVAGKKLAK) are disordered. A compositionally biased stretch (basic residues) spans 100-123 (QRTRSNARTRRGAKKTVAGKKLAK).

This sequence belongs to the universal ribosomal protein uS13 family. As to quaternary structure, part of the 30S ribosomal subunit.

It localises to the plastid. The protein localises to the chloroplast. Located at the top of the head of the 30S subunit, it contacts several helices of the 16S rRNA. The chain is Small ribosomal subunit protein uS13c from Cyanidioschyzon merolae (strain NIES-3377 / 10D) (Unicellular red alga).